Here is a 397-residue protein sequence, read N- to C-terminus: Arginine biosynthesis bifunctional protein ArgJ (397 aa).

Substrate is bound by residues Thr-147, Lys-173, Thr-184, Glu-270, Asn-392, and Thr-397. The active-site Nucleophile is Thr-184.

The protein belongs to the ArgJ family. Heterotetramer of two alpha and two beta chains.

The protein resides in the cytoplasm. The enzyme catalyses N(2)-acetyl-L-ornithine + L-glutamate = N-acetyl-L-glutamate + L-ornithine. It catalyses the reaction L-glutamate + acetyl-CoA = N-acetyl-L-glutamate + CoA + H(+). Its pathway is amino-acid biosynthesis; L-arginine biosynthesis; L-ornithine and N-acetyl-L-glutamate from L-glutamate and N(2)-acetyl-L-ornithine (cyclic): step 1/1. The protein operates within amino-acid biosynthesis; L-arginine biosynthesis; N(2)-acetyl-L-ornithine from L-glutamate: step 1/4. Its function is as follows. Catalyzes two activities which are involved in the cyclic version of arginine biosynthesis: the synthesis of N-acetylglutamate from glutamate and acetyl-CoA as the acetyl donor, and of ornithine by transacetylation between N(2)-acetylornithine and glutamate. The chain is Arginine biosynthesis bifunctional protein ArgJ from Streptococcus mutans serotype c (strain ATCC 700610 / UA159).